The primary structure comprises 388 residues: Mannitol-1-phosphate 5-dehydrogenase (388 aa).

3–14 (ALHFGAGNIGRG) provides a ligand contact to NAD(+).

This sequence belongs to the mannitol dehydrogenase family.

The catalysed reaction is D-mannitol 1-phosphate + NAD(+) = beta-D-fructose 6-phosphate + NADH + H(+). In Buchnera aphidicola subsp. Schizaphis graminum (strain Sg), this protein is Mannitol-1-phosphate 5-dehydrogenase.